We begin with the raw amino-acid sequence, 283 residues long: Phosphatidylglycerol--prolipoprotein diacylglyceryl transferase (283 aa).

A run of 7 helical transmembrane segments spans residues 18–38, 62–82, 106–126, 136–156, 190–210, 218–238, and 252–272; these read LGGI…VVAF, YFLW…VLIY, FIGI…IASY, LLIY…FGRI, PSQL…VMWA, GLLI…AEFY, and LSMG…ILLY. Residue Arg155 participates in a 1,2-diacyl-sn-glycero-3-phospho-(1'-sn-glycerol) binding.

This sequence belongs to the Lgt family.

It localises to the cell inner membrane. The catalysed reaction is L-cysteinyl-[prolipoprotein] + a 1,2-diacyl-sn-glycero-3-phospho-(1'-sn-glycerol) = an S-1,2-diacyl-sn-glyceryl-L-cysteinyl-[prolipoprotein] + sn-glycerol 1-phosphate + H(+). It participates in protein modification; lipoprotein biosynthesis (diacylglyceryl transfer). Functionally, catalyzes the transfer of the diacylglyceryl group from phosphatidylglycerol to the sulfhydryl group of the N-terminal cysteine of a prolipoprotein, the first step in the formation of mature lipoproteins. The polypeptide is Phosphatidylglycerol--prolipoprotein diacylglyceryl transferase (Helicobacter pylori (strain J99 / ATCC 700824) (Campylobacter pylori J99)).